Reading from the N-terminus, the 151-residue chain is uncharacterized protein (151 aa).

Residues 40 to 57 show a composition bias toward polar residues; that stretch reads QMNRRNSENNTFDASNVG. The interval 40–125 is disordered; the sequence is QMNRRNSENN…KRQPHYAEPI (86 aa). Positions 83 to 110 are enriched in low complexity; the sequence is QRQNGRQHQHAGQQQPQHQHTQSQTRQT.

This is an uncharacterized protein from Bacillus subtilis (strain 168).